Here is a 516-residue protein sequence, read N- to C-terminus: Katanin p60 ATPase-containing subunit A1 (516 aa).

Residues 75–212 (GFKSEPAAPE…DEKKFDPAGY (138 aa)) form a disordered region. Basic and acidic residues-rich tracts occupy residues 133–143 (ARKDPPRRSEP) and 155–167 (RGGRGPSDRRGDA). The span at 168 to 178 (RSGGGGRGGAR) shows a compositional bias: gly residues. The segment covering 179-212 (GSDKDKNRGGKSDKDKKAPSGEEGDEKKFDPAGY) has biased composition (basic and acidic residues). Residue 274-281 (GPPGTGKT) participates in ATP binding.

The protein belongs to the AAA ATPase family. Katanin p60 subunit A1 subfamily. Can homooligomerize into hexameric rings, which may be promoted by interaction with microtubules. Interacts with KATNB1, which may serve as a targeting subunit.

It localises to the cytoplasm. The protein resides in the cytoskeleton. The protein localises to the microtubule organizing center. It is found in the centrosome. Its subcellular location is the spindle pole. The enzyme catalyses n ATP + n H2O + a microtubule = n ADP + n phosphate + (n+1) alpha/beta tubulin heterodimers.. Its activity is regulated as follows. ATPase activity is stimulated by microtubules, which promote homooligomerization. ATP-dependent microtubule severing is stimulated by interaction with KATNB1. Catalytic subunit of a complex which severs microtubules in an ATP-dependent manner. Microtubule severing may promote rapid reorganization of cellular microtubule arrays and the release of microtubules from the centrosome following nucleation. In mitotic spindles this could allow depolymerization of the microtubule end proximal to the centrosome, and subsequent poleward microtubule flux. This chain is Katanin p60 ATPase-containing subunit A1, found in Strongylocentrotus purpuratus (Purple sea urchin).